A 92-amino-acid chain; its full sequence is Small ribosomal subunit protein uS19c (92 aa).

This sequence belongs to the universal ribosomal protein uS19 family.

It localises to the plastid. The protein localises to the chloroplast. Its function is as follows. Protein S19 forms a complex with S13 that binds strongly to the 16S ribosomal RNA. The sequence is that of Small ribosomal subunit protein uS19c from Fagopyrum esculentum subsp. ancestrale (Wild buckwheat).